A 449-amino-acid polypeptide reads, in one-letter code: Allantoinase (449 aa).

Zn(2+) contacts are provided by H61, H63, K148, H184, H240, and D313. K148 carries the post-translational modification N6-carboxylysine.

It belongs to the metallo-dependent hydrolases superfamily. Allantoinase family. Homotetramer. Requires Zn(2+) as cofactor. In terms of processing, carboxylation allows a single lysine to coordinate two zinc ions.

The catalysed reaction is (S)-allantoin + H2O = allantoate + H(+). It participates in nitrogen metabolism; (S)-allantoin degradation; allantoate from (S)-allantoin: step 1/1. Catalyzes the conversion of allantoin (5-ureidohydantoin) to allantoic acid by hydrolytic cleavage of the five-member hydantoin ring. This chain is Allantoinase, found in Desulfitobacterium hafniense (strain Y51).